A 274-amino-acid chain; its full sequence is Mitochondrial outer membrane protein porin 4 (274 aa).

Gly-2 bears the N-acetylglycine mark. Phosphoserine is present on Ser-76.

It belongs to the eukaryotic mitochondrial porin (TC 1.B.8.1) family. In terms of tissue distribution, widely expressed.

The protein resides in the cell membrane. It localises to the mitochondrion outer membrane. In terms of biological role, forms a channel through the mitochondrial outer membrane that allows diffusion of small hydrophilic molecules. The channel adopts an open conformation at low or zero membrane potential and a closed conformation at potentials above 30-40 mV. The open state has a weak anion selectivity whereas the closed state is cation-selective. Involved in plant growth and development at the vegetative and reproductive stages. Is important for leaf and pollen development and mitochondrial membrane potential steady state. May be involved in disease resistance. In Arabidopsis thaliana (Mouse-ear cress), this protein is Mitochondrial outer membrane protein porin 4 (VDAC4).